The chain runs to 176 residues: Inner membrane-spanning protein YciB (176 aa).

6 consecutive transmembrane segments (helical) span residues 3-23, 24-44, 49-69, 81-101, 121-141, and 149-169; these read FLFDLFPIILFFAAFKVWGIF, TATAVAIVATLAQVAWVAFRH, TMLWVSLGVIVVFGGATLVLH, LYWLFAIGLLAARYAFGNNLI, VAWALFFAVLGLANLYVVHNF, and FKLFGTTGAMVVFIILQSLWL.

This sequence belongs to the YciB family.

The protein localises to the cell inner membrane. In terms of biological role, plays a role in cell envelope biogenesis, maintenance of cell envelope integrity and membrane homeostasis. This is Inner membrane-spanning protein YciB from Burkholderia vietnamiensis (strain G4 / LMG 22486) (Burkholderia cepacia (strain R1808)).